The chain runs to 188 residues: Putative nucleotidase OB0422 (188 aa).

Belongs to the 5'(3')-deoxyribonucleotidase family.

In Oceanobacillus iheyensis (strain DSM 14371 / CIP 107618 / JCM 11309 / KCTC 3954 / HTE831), this protein is Putative nucleotidase OB0422.